The following is a 73-amino-acid chain: U-scoloptoxin(03)-Ssd1b (73 aa).

An N-terminal signal peptide occupies residues 1-23; the sequence is MKSSMAVLLVMGLIIFTLDKCYS.

Contains 3 disulfide bonds. Expressed by the venom gland.

It is found in the secreted. In Scolopendra dehaani (Thai centipede), this protein is U-scoloptoxin(03)-Ssd1b.